The chain runs to 1328 residues: Retrovirus-related Pol polyprotein from transposon TNT 1-94 (1328 aa).

Residues Pro189–Ala265 form a disordered region. A compositionally biased stretch (basic residues) spans Ala217 to Val229. The segment at Arg230–Asn247 adopts a CCHC-type zinc-finger fold. Residues Phe241–Gly253 are compositionally biased toward basic and acidic residues. Asp297 (for protease activity) is an active-site residue. Positions Ser473–Glu642 constitute an Integrase catalytic domain. Over residues Thr729–Ser742 the composition is skewed to polar residues. Residues Thr729–Thr800 form a disordered region. Residues Glu770 to Pro798 show a composition bias toward basic and acidic residues.

It catalyses the reaction DNA(n) + a 2'-deoxyribonucleoside 5'-triphosphate = DNA(n+1) + diphosphate. The polypeptide is Retrovirus-related Pol polyprotein from transposon TNT 1-94 (Nicotiana tabacum (Common tobacco)).